The following is a 160-amino-acid chain: ATP synthase subunit delta, mitochondrial (160 aa).

A mitochondrion-targeting transit peptide spans 1-22 (MLRSIIGKSASRSLNFVAKRSY).

The protein belongs to the ATPase epsilon chain family. In terms of assembly, F-type ATPases have 2 components, CF(1) - the catalytic core - and CF(0) - the membrane proton channel. CF(1) has five subunits: alpha(3), beta(3), gamma(1), delta(1), epsilon(1). CF(0) has three main subunits: a, b and c.

Its subcellular location is the mitochondrion. It localises to the mitochondrion inner membrane. Functionally, mitochondrial membrane ATP synthase (F(1)F(0) ATP synthase or Complex V) produces ATP from ADP in the presence of a proton gradient across the membrane which is generated by electron transport complexes of the respiratory chain. F-type ATPases consist of two structural domains, F(1) - containing the extramembraneous catalytic core, and F(0) - containing the membrane proton channel, linked together by a central stalk and a peripheral stalk. During catalysis, ATP turnover in the catalytic domain of F(1) is coupled via a rotary mechanism of the central stalk subunits to proton translocation. Part of the complex F(1) domain and of the central stalk which is part of the complex rotary element. Rotation of the central stalk against the surrounding alpha(3)beta(3) subunits leads to hydrolysis of ATP in three separate catalytic sites on the beta subunits. The sequence is that of ATP synthase subunit delta, mitochondrial (ATP16) from Saccharomyces cerevisiae (strain ATCC 204508 / S288c) (Baker's yeast).